Reading from the N-terminus, the 395-residue chain is MVAGTRCLLALLLPQVLLGGAAGLIPELGRRKFAASSGRPSPQPSDDILSEFELRLLSMFGLKQRPTPSRDAVVPPYMLDLYRRHSGQPGAPAPDHRLERAASRANTVRSFHHEESLEELPETSGKTTRRFFFNLTSIPPEEFITSAELQVFREQMQEALGDDSGFHHRINIYEIIKPATANSKFPATRLLDTRLVNQNTSRWESFDVTPAVMRWTAQGHANHGFVVEVTHLEEKQGVSKRHVRISRSLHPDEHSWSQIRPLLVTFGHDGKGHPLHRREKRQAKHKQRKRLKSSCKRHPLYVDFSDVGWNDWIVAPPGYHAFYCHGECPFPLADHLNSTNHAIVQTLVNSVNSKIPKACCVPTELSAISMLYLDENEKVVLKNYQDMVVEGCGCR.

The first 23 residues, 1-23 (MVAGTRCLLALLLPQVLLGGAAG), serve as a signal peptide directing secretion. A propeptide spans 24-281 (LIPELGRRKF…GHPLHRREKR (258 aa)) (cleaved by PCSK5). A Phosphoserine modification is found at S86. N-linked (GlcNAc...) asparagine glycans are attached at residues N134 and N199. A disordered region spans residues 270–292 (GKGHPLHRREKRQAKHKQRKRLK). Residues 273-292 (HPLHRREKRQAKHKQRKRLK) are compositionally biased toward basic residues. 3 cysteine pairs are disulfide-bonded: C295/C360, C324/C392, and C328/C394. N-linked (GlcNAc...) asparagine glycosylation occurs at N337.

The protein belongs to the TGF-beta family. As to quaternary structure, homodimer; disulfide-linked. Interacts with SOSTDC1. Interacts with GREM2, RGMA, RGMB and RGMC. Interacts with ASPN. Interacts with MAFP5. Interacts with FBN1 (via N-terminal domain) and FBN2. Interacts with type I receptor BMPR1A. Interacts with type II receptor BMPR2. Interacts with SCUBE3. Interacts with TNFAIP6 (primarily via Link domain); this interaction is inhibited by hyaluronan. Interacts with ERFE. Interacts with BMPR1A/ALK3; the interaction may induce HAMP expression. Forms heterodimers with BMP6 in vitro; the heterodimer then binds to its receptor BMPR1A /ALK3 and may induce HAMP expression. Interacts with TGFBR3.

It localises to the secreted. Functionally, growth factor of the TGF-beta superfamily that plays essential roles in many developmental processes, including cardiogenesis, neurogenesis, and osteogenesis. Induces cartilage and bone formation. Initiates the canonical BMP signaling cascade by associating with type I receptor BMPR1A and type II receptor BMPR2. Once all three components are bound together in a complex at the cell surface, BMPR2 phosphorylates and activates BMPR1A. In turn, BMPR1A propagates signal by phosphorylating SMAD1/5/8 that travel to the nucleus and act as activators and repressors of transcription of target genes. Also acts to promote expression of HAMP, via the interaction with its receptor BMPR1A/ALK3. Can also signal through non-canonical pathways such as ERK/MAP kinase signaling cascade that regulates osteoblast differentiation. Also stimulates the differentiation of myoblasts into osteoblasts via the EIF2AK3-EIF2A-ATF4 pathway by stimulating EIF2A phosphorylation which leads to increased expression of ATF4 which plays a central role in osteoblast differentiation. Acts as a positive regulator of odontoblast differentiation during mesenchymal tooth germ formation, expression is repressed during the bell stage by MSX1-mediated inhibition of CTNNB1 signaling. This chain is Bone morphogenetic protein 2 (BMP2), found in Oryctolagus cuniculus (Rabbit).